We begin with the raw amino-acid sequence, 475 residues long: Ammonium transporter Rh type C (475 aa).

At 1–20 (MGCVQSFRNFCDRPKNTNVR) the chain is on the cytoplasmic side. A helical transmembrane segment spans residues 21 to 41 (ISLPAVCFVWQIAMIILFGVF). At 42 to 73 (IRYNEEADTHWVEYRKKENISSDIENDFYFRY) the chain is on the extracellular side. The N-linked (GlcNAc...) asparagine glycan is linked to N60. Residues 74-94 (PSFQDVHVMIFVGFGFLMTFL) form a helical membrane-spanning segment. The Cytoplasmic segment spans residues 95-98 (KRYS). Residues 99–119 (FGAVGFNFLIAAFGLQWALLM) form a helical membrane-spanning segment. At 120–138 (QGWFHSLDYTDGKIKIGIE) the chain is on the extracellular side. A helical transmembrane segment spans residues 139-159 (NLINADFCVAGCLIAYGAVLG). At 160-167 (KVSPVQLM) the chain is on the cytoplasmic side. Residues 168–188 (VLTLFGITLFAVEEYIILNLI) form a helical membrane-spanning segment. Residues 189-193 (HARDA) are Extracellular-facing. A helical membrane pass occupies residues 194–214 (GGSMVIHTFGGYYGLSISWML). Over 215–233 (YRPNLEQSSNLQGSVYQSD) the chain is Cytoplasmic. Residues 234–254 (VFAMIGTLFLWMFWPSFNSAI) form a helical membrane-spanning segment. The Extracellular portion of the chain corresponds to 255–265 (TDHGDGQHRAA). A helical membrane pass occupies residues 266-286 (INTYLALASTVLTTVAISSLF). The Cytoplasmic portion of the chain corresponds to 287–299 (QKHGKLDMVHIQN). A helical membrane pass occupies residues 300-320 (STLAGGVAVGTAAEFMLMPYG). S321 is a topological domain (extracellular). Residues 322 to 342 (LIVGFCCGIISTLGYIYLTPF) form a helical membrane-spanning segment. The Cytoplasmic segment spans residues 343–357 (MEKYLKIQDTCGIHN). The chain crosses the membrane as a helical span at residues 358–378 (LHAMPGLIGGIVGAITAAAAT). The Extracellular segment spans residues 379 to 410 (ESVYGKEGLVNTFDFVGPFKNMVPTTQGGHQA). Residues 411 to 431 (AGLCVAICFGIGGGIMVGCIL) form a helical membrane-spanning segment. Residues 432-475 (RLPIWCDPADDNCFNDEPYWELPEEEEIIPPILHYNNHMVNKDV) lie on the Cytoplasmic side of the membrane.

This sequence belongs to the ammonium transporter (TC 2.A.49) family. Rh subfamily. As to quaternary structure, homotrimer.

It is found in the apical cell membrane. Functions as an ammonia transporter. May play a role in the elimination of ammonia in the gill. This Tetraodon nigroviridis (Spotted green pufferfish) protein is Ammonium transporter Rh type C (rhcg).